A 193-amino-acid polypeptide reads, in one-letter code: Bcl-2-binding component 3 (193 aa).

2 disordered regions span residues 1-32 and 71-131; these read MARA…RLMP and ALGG…VEEE. Serine 10 is modified (phosphoserine). The BH3 motif lies at 137-151; it reads IGAQLRRMADDLNAQ.

The protein belongs to the Bcl-2 family. Interacts with MCL1 and BCL2A1. Interacts (via BH3 domain) with BCL2 and BCL2L1/BCL-XL. Interacts (via BH3 domain) with NOL3/ARC (via CARD domain); this interaction prevents BBC3 association with BCL2 and results in CASP8 activation.

It is found in the mitochondrion. Essential mediator of p53/TP53-dependent and p53/TP53-independent apoptosis. Promotes partial unfolding of BCL2L1 and dissociation of BCL2L1 from p53/TP53, releasing the bound p53/TP53 to induce apoptosis. Regulates ER stress-induced neuronal apoptosis. This is Bcl-2-binding component 3 (Bbc3) from Rattus norvegicus (Rat).